Consider the following 243-residue polypeptide: Arginine transport ATP-binding protein ArtP (243 aa).

Residues 3–242 (IRVKNLNFFY…KTEQFKHYLS (240 aa)) form the ABC transporter domain. 35–42 (GPSGAGKS) serves as a coordination point for ATP.

Belongs to the ABC transporter superfamily. The complex is composed of two ATP-binding proteins (ArtP), two transmembrane proteins (ArtM and ArtQ) and a solute-binding protein (ArtI).

The protein resides in the cell inner membrane. It catalyses the reaction a polar amino acid(out) + ATP + H2O = a polar amino acid(in) + ADP + phosphate + H(+). It carries out the reaction L-arginine(out) + ATP + H2O = L-arginine(in) + ADP + phosphate + H(+). Its function is as follows. Part of the ABC transporter complex ArtPIQM involved in arginine transport. Probably responsible for energy coupling to the transport system. The polypeptide is Arginine transport ATP-binding protein ArtP (artP) (Haemophilus influenzae (strain ATCC 51907 / DSM 11121 / KW20 / Rd)).